A 529-amino-acid chain; its full sequence is MSGLLTDPEQRAQEPRYPGFVLGLDVGSSVIRCHVYDRAARVCGSSVQKVENLYPQIGWVEIDPDVLWIQFVAVIKEAVKAAGIQMNQIVGLGISTQRATFITWNKKTGNHFHNFISWQDLRAVELVKSWNNSLLMKIFHSSCRVLHFFTRSKRLFTASLFTFTTQQTSLRLVWILQNLTEVQKAVEEENCCFGTIDTWLLYKLTKGSVYATDFSNASTTGLFDPYKMCWSGMITSLISIPLSLLPPVRDTSHNFGSVDEEIFGVPIPIVALVADQQSAMFGECCFQTGDVKLTMGTGTFLDINTGNSLQQTTGGFYPLIGWKIGQEVVCLAESNAGDTGTAIKWAQQLDLFTDAAETEKMAKSLEDSEGVCFVPSFSGLQAPLNDPWACASFMGLKPSTSKYHLVRAILESIAFRNKQLYEMMKKEIHIPVRKIRADGGVCKNGFVMQMTSDLINENIDRPADIDMSCLGAASLAGLAVGFWTDKEELKKLRQSEVVFKPQKKCQEYEMSLENWAKAVKRSMNWYNKT.

2 residues coordinate ATP: serine 28 and serine 29. Residues arginine 98, aspartate 275, and glutamine 276 each coordinate glycerol. ATP contacts are provided by threonine 297, glycine 340, and glycine 440.

It belongs to the FGGY kinase family.

The protein localises to the cytoplasm. It carries out the reaction glycerol + ATP = sn-glycerol 3-phosphate + ADP + H(+). The protein operates within polyol metabolism; glycerol degradation via glycerol kinase pathway; sn-glycerol 3-phosphate from glycerol: step 1/1. Its function is as follows. Skin-specific kinase that plays a key role in glycerol metabolism, catalyzing its phosphorylation to produce sn-glycerol 3-phosphate. Involved in skin-specific regulation of sterol regulatory element-binding protein (SREBP) processing and lipid biosynthesis. The sequence is that of Glycerol kinase 5 from Homo sapiens (Human).